A 433-amino-acid polypeptide reads, in one-letter code: GTPase Obg (433 aa).

Positions 1–159 (MGLTDYCECR…LHVSLEIKYL (159 aa)) constitute an Obg domain. The 170-residue stretch at 160 to 329 (ANVGIVGFPN…LVAQVFALHQ (170 aa)) folds into the OBG-type G domain. GTP is bound by residues 166-173 (GFPNTGKS), 191-195 (FTTLV), 212-215 (DIPG), 282-285 (NKTD), and 310-312 (ISA). 2 residues coordinate Mg(2+): S173 and T193. The 79-residue stretch at 355 to 433 (ASETDHDPLN…FAGQEFVIND (79 aa)) folds into the OCT domain.

Belongs to the TRAFAC class OBG-HflX-like GTPase superfamily. OBG GTPase family. Monomer. Requires Mg(2+) as cofactor.

The protein localises to the cytoplasm. Its function is as follows. An essential GTPase which binds GTP, GDP and possibly (p)ppGpp with moderate affinity, with high nucleotide exchange rates and a fairly low GTP hydrolysis rate. Plays a role in control of the cell cycle, stress response, ribosome biogenesis and in those bacteria that undergo differentiation, in morphogenesis control. The protein is GTPase Obg of Mycoplasma pneumoniae (strain ATCC 29342 / M129 / Subtype 1) (Mycoplasmoides pneumoniae).